The following is a 514-amino-acid chain: Cytidine and dCMP deaminase domain-containing protein 1 (514 aa).

2 stretches are compositionally biased toward polar residues: residues 1-11 (MKEAGQMQNLE) and 18-27 (SVSTQTGSMT). Disordered regions lie at residues 1-27 (MKEA…GSMT) and 55-83 (RQKS…TDKR). The segment covering 59 to 83 (QKNEEGKHGPLGDNEERTRVSTDKR) has biased composition (basic and acidic residues). Residues 70-168 (GDNEERTRVS…SLLTEASSSE (99 aa)) enclose the CMP/dCMP-type deaminase 1 domain. Zn(2+) is bound by residues histidine 109, cysteine 134, and cysteine 137. A Nuclear export signal motif is present at residues 271–283 (NLRQNMKDLILLL). In terms of domain architecture, CMP/dCMP-type deaminase 2 spans 317 to 482 (EIARHCMVQA…LNPSGAYGLE (166 aa)). A Zn(2+)-binding site is contributed by histidine 398. Residue glutamate 400 is the Proton donor of the active site. The Zn(2+) site is built by cysteine 426 and cysteine 429. Residues 480 to 514 (GLEQNEPERRENGVLRPVPQKEEQHQDKKLRLGIH) form a disordered region. The span at 485 to 514 (EPERRENGVLRPVPQKEEQHQDKKLRLGIH) shows a compositional bias: basic and acidic residues. The short motif at 488-510 (RRENGVLRPVPQKEEQHQDKKLR) is the Bipartite nuclear localization signal element.

Belongs to the cytidine and deoxycytidylate deaminase family. Zn(2+) serves as cofactor. Widely expressed. Expressed at high levels in the testis.

It is found in the cytoplasm. Its subcellular location is the nucleus. It carries out the reaction 2'-deoxycytidine + H2O + H(+) = 2'-deoxyuridine + NH4(+). The enzyme catalyses cytidine + H2O + H(+) = uridine + NH4(+). In terms of biological role, catalyzes the deamination of cytidine and deoxycytidine into uridine and deoxyuridine, respectively. May play an important role in testicular development and spermatogenesis. The polypeptide is Cytidine and dCMP deaminase domain-containing protein 1 (CDADC1) (Homo sapiens (Human)).